A 433-amino-acid chain; its full sequence is Probable imidazolonepropionase (433 aa).

4-imidazolone-5-propanoate contacts are provided by Tyr160 and His193. Tyr160 lines the N-formimidoyl-L-glutamate pocket. Position 261 (His261) interacts with Fe(3+). His261 contacts Zn(2+). Glu264 is a binding site for 4-imidazolone-5-propanoate. Asp335 contributes to the Fe(3+) binding site. Asp335 lines the Zn(2+) pocket. Asn337 contacts N-formimidoyl-L-glutamate.

Belongs to the metallo-dependent hydrolases superfamily. HutI family. Zn(2+) is required as a cofactor. Requires Fe(3+) as cofactor.

It carries out the reaction 4-imidazolone-5-propanoate + H2O = N-formimidoyl-L-glutamate. The protein operates within amino-acid degradation; L-histidine degradation into L-glutamate; N-formimidoyl-L-glutamate from L-histidine: step 3/3. The chain is Probable imidazolonepropionase (amdhd1) from Danio rerio (Zebrafish).